Consider the following 807-residue polypeptide: AP-5 complex subunit zeta-1 (807 aa).

In terms of assembly, probably part of the adaptor protein complex 5 (AP-5) a tetramer composed of AP5B1, AP5M1, AP5S1 and AP5Z1. Interacts with ZFYVE26 and SPG11.

The protein resides in the cytoplasm. It localises to the nucleus. Its function is as follows. As part of AP-5, a probable fifth adaptor protein complex it may be involved in endosomal transport. The chain is AP-5 complex subunit zeta-1 (Ap5z1) from Mus musculus (Mouse).